A 363-amino-acid polypeptide reads, in one-letter code: GTPase Obg (363 aa).

The 159-residue stretch at 1-159 folds into the Obg domain; it reads MKFLDEAKVY…KTIWLRLKLI (159 aa). The OBG-type G domain occupies 160–327; sequence ADAGLVGLPN…VLRALRDIIV (168 aa). Residues 166–173, 191–195, 212–215, 279–282, and 308–310 each bind GTP; these read GLPNAGKS, FTTLH, DIPG, SQID, and SAV. Mg(2+)-binding residues include Ser-173 and Thr-193. The tract at residues 332 to 363 is disordered; that stretch reads EEKPAKAPKLRHRDMIVSEENNQGEDGADDQP. Residues 353 to 363 are compositionally biased toward acidic residues; that stretch reads NQGEDGADDQP.

Belongs to the TRAFAC class OBG-HflX-like GTPase superfamily. OBG GTPase family. As to quaternary structure, monomer. Requires Mg(2+) as cofactor.

It is found in the cytoplasm. An essential GTPase which binds GTP, GDP and possibly (p)ppGpp with moderate affinity, with high nucleotide exchange rates and a fairly low GTP hydrolysis rate. Plays a role in control of the cell cycle, stress response, ribosome biogenesis and in those bacteria that undergo differentiation, in morphogenesis control. The sequence is that of GTPase Obg from Rhizobium etli (strain ATCC 51251 / DSM 11541 / JCM 21823 / NBRC 15573 / CFN 42).